The following is a 557-amino-acid chain: Organic cation/carnitine transporter 2 (557 aa).

The Cytoplasmic portion of the chain corresponds to 1–20; it reads MRDYDEVTAFLGEWGPFQRL. Residues 21-41 form a helical membrane-spanning segment; that stretch reads IFFLLSASIIPNGFNGMSIVF. The Extracellular portion of the chain corresponds to 42 to 142; the sequence is LAGTPEHRCL…DLVCKDDWKA (101 aa). N57, N64, and N91 each carry an N-linked (GlcNAc...) asparagine glycan. Residues 143–163 traverse the membrane as a helical segment; the sequence is PLTTSLFFVGVLMGSFISGQL. Residues 164–172 are Cytoplasmic-facing; the sequence is SDRFGRKNV. Residues 173-193 traverse the membrane as a helical segment; the sequence is LFLTMGMQTGFSFLQVFSVNF. The Extracellular segment spans residues 194-197; the sequence is EMFT. A helical membrane pass occupies residues 198 to 218; that stretch reads VLFVLVGMGQISNYVAAFVLG. Position 218–225 (218–225) interacts with ATP; sequence GTEILSKS. The Cytoplasmic segment spans residues 219–232; it reads TEILSKSIRIIFAT. The helical transmembrane segment at 233–253 threads the bilayer; sequence LGVCIFYAFGFMVLPLFAYFI. At 254 to 257 the chain is on the extracellular side; sequence RDWR. The helical transmembrane segment at 258-278 threads the bilayer; it reads MLLLALTVPGVLCGALWWFIP. Over 279–341 the chain is Cytoplasmic; the sequence is ESPRWLISQG…YDLIRTRNIR (63 aa). A helical membrane pass occupies residues 342-362; the sequence is VITIMSIILWLTISVGYFGLS. The Extracellular segment spans residues 363–373; the sequence is LDTPNLHGDIY. Residues 374–394 form a helical membrane-spanning segment; that stretch reads VNCFLLAAVEVPAYVLAWLLL. The Cytoplasmic portion of the chain corresponds to 395–406; that stretch reads QYLPRRYSISAA. Residues 407–427 form a helical membrane-spanning segment; the sequence is LFLGGSVLLFMQLVPSELFYL. Over 428 to 430 the chain is Extracellular; the sequence is STA. Residues 431–451 traverse the membrane as a helical segment; sequence LVMVGKFGITSAYSMVYVYTA. The Cytoplasmic segment spans residues 452 to 462; that stretch reads ELYPTVVRNMG. A helical membrane pass occupies residues 463 to 483; the sequence is VGVSSTASRLGSILSPYFVYL. Over 484 to 488 the chain is Extracellular; it reads GAYDR. Y486 is modified (phosphotyrosine). A helical membrane pass occupies residues 489-509; the sequence is FLPYILMGSLTILTAILTLFF. The Cytoplasmic portion of the chain corresponds to 510–557; the sequence is PESFGVPLPDTIDQMLRVKGIKQWQIQSQTRMQKDGEESPTVLKSTAF. S548 carries the post-translational modification Phosphoserine. A Phosphothreonine modification is found at T550.

This sequence belongs to the major facilitator (TC 2.A.1) superfamily. Organic cation transporter (TC 2.A.1.19) family. Interacts with PDZK1. As to expression, widely expressed. Expressed in kidney, liver and testis. Expressed at the brush border of the small, large intestine and colon (at protein level).

The protein localises to the apical cell membrane. It is found in the basal cell membrane. The protein resides in the cell membrane. It carries out the reaction (R)-carnitine(out) + Na(+)(out) = (R)-carnitine(in) + Na(+)(in). The enzyme catalyses glycine betaine(out) + Na(+)(out) = glycine betaine(in) + Na(+)(in). It catalyses the reaction glycine betaine(out) + (R)-carnitine(in) = glycine betaine(in) + (R)-carnitine(out). The catalysed reaction is O-butanoyl-(R)-carnitine(out) + Na(+)(out) = O-butanoyl-(R)-carnitine(in) + Na(+)(in). It carries out the reaction O-acetyl-(R)-carnitine(out) + Na(+)(out) = O-acetyl-(R)-carnitine(in) + Na(+)(in). The enzyme catalyses O-propanoyl-(R)-carnitine(out) + Na(+)(out) = O-propanoyl-(R)-carnitine(in) + Na(+)(in). It catalyses the reaction (S)-carnitine(out) + Na(+)(out) = (S)-carnitine(in) + Na(+)(in). The catalysed reaction is an O-acyl-(R)-carnitine(out) + Na(+)(out) = an O-acyl-(R)-carnitine(in) + Na(+)(in). It carries out the reaction L-glutamyl-L-arginyl-glycyl-L-methionyl-L-threonine(out) + Na(+)(out) = L-glutamyl-L-arginyl-glycyl-L-methionyl-L-threonine(in) + Na(+)(in). The enzyme catalyses N,N-dimethylglycine(out) + Na(+)(out) = N,N-dimethylglycine(in) + Na(+)(in). Its activity is regulated as follows. Inhibited by emetine, quinidine and verapamil. The IC(50) of emetine is 4.2 uM. Not inhibited by valproic acid. Transport of (R)-carnitine is stimulated by cholesterol in the plasma membrane. Its function is as follows. Sodium-ion dependent, high affinity carnitine transporter. Involved in the active cellular uptake of carnitine. Transports one sodium ion with one molecule of carnitine. Also transports organic cations such as tetraethylammonium (TEA) without the involvement of sodium. Also relative uptake activity ratio of carnitine to TEA is 11.3. May also contribute to regulate the transport of organic compounds in testis across the blood-testis-barrier. The sequence is that of Organic cation/carnitine transporter 2 from Mus musculus (Mouse).